The following is an 85-amino-acid chain: Cell division topological specificity factor (85 aa).

This sequence belongs to the MinE family.

In terms of biological role, prevents the cell division inhibition by proteins MinC and MinD at internal division sites while permitting inhibition at polar sites. This ensures cell division at the proper site by restricting the formation of a division septum at the midpoint of the long axis of the cell. This is Cell division topological specificity factor from Xanthomonas campestris pv. campestris (strain 8004).